The primary structure comprises 200 residues: Small ribosomal subunit protein uS4c (200 aa).

The 61-residue stretch at 88 to 148 (IRLDNTIFNL…PKSYYIFKLC (61 aa)) folds into the S4 RNA-binding domain.

This sequence belongs to the universal ribosomal protein uS4 family. Part of the 30S ribosomal subunit.

The protein resides in the plastid. It localises to the apicoplast. In terms of biological role, one of the primary rRNA binding proteins, it binds directly to 16S rRNA where it nucleates assembly of the body of the 30S subunit. The protein is Small ribosomal subunit protein uS4c (rps4) of Eimeria tenella (Coccidian parasite).